The primary structure comprises 125 residues: uncharacterized protein (125 aa).

The disordered stretch occupies residues 36 to 57; sequence EAKKAKEKQDSKTKDTDKKVDQ. A helical membrane pass occupies residues 92 to 112; sequence ITIFLLIVLVSAIMIGIYFGI.

It localises to the membrane. This is an uncharacterized protein from Mycoplasma pneumoniae (strain ATCC 29342 / M129 / Subtype 1) (Mycoplasmoides pneumoniae).